A 122-amino-acid polypeptide reads, in one-letter code: Selenoprotein H (122 aa).

N6-acetyllysine is present on Lys20. The segment at residues 41-44 (CTSU) is a cross-link (cysteinyl-selenocysteine (Cys-Sec); redox-active). Residue Sec44 is a non-standard amino acid, selenocysteine.

This sequence belongs to the SelWTH family.

Its function is as follows. May be involved in a redox-related process. This chain is Selenoprotein H, found in Homo sapiens (Human).